Reading from the N-terminus, the 289-residue chain is Phosphoribulokinase (289 aa).

12-20 (GSSGAGTTT) serves as a coordination point for ATP.

It belongs to the phosphoribulokinase family.

It carries out the reaction D-ribulose 5-phosphate + ATP = D-ribulose 1,5-bisphosphate + ADP + H(+). The protein operates within carbohydrate biosynthesis; Calvin cycle. The chain is Phosphoribulokinase (cbbP) from Sinorhizobium medicae (strain WSM419) (Ensifer medicae).